Consider the following 577-residue polypeptide: MNIAAVFNALLVSVLATVLWKYIKLREHAFMVEEELVLMRQSQELSQVQIDYHAALQTLLEDGTRMVCTGRMHTDRICRFESLCYSTEAEEFIYFHSNSSVMLPNLGSRRFQPALLDLSSVEDHNTQYFNFVELPAAALKFMPKPVFVPDVALIANRFNPDNLMHVFHDDLLPIYYTMQQFTDLDPETRLFFMEGWSEGVHFDLYKLLSNKQPLLREQLKTLGRLLCFTKSYVGLSKITTWYQYGFVQPQGPKANILVSGNEIRQFTKFMMQKLNVSLEESSSEEYIVVFSRTINRLILNEAELILALAQEFQMKTITVSLEEHSFSDIVRLISNASMLVSMHGAQLVMSLFLPRGATVVELFPYAINPEHYTPYKTLATLPGMDLQYIAWQNTAREDTVTYPDRPWDQGGIAHLDKAEQERIIKSTEVPRHLCCRNPEWLFRAYQDTKVDIPSLIHVIRQTVKSKPGPKKKWSGSLYPGKVRDARCQASVQGTSEARLSVSWQVPWNLKYLKVREVKYEVWIQEQGENTYMPYILSHQNHTFSENIKPFTIYLVWIRCIFNKNLLGPFADVLLCST.

Residues 1 to 4 lie on the Cytoplasmic side of the membrane; it reads MNIA. The chain crosses the membrane as a helical; Signal-anchor for type II membrane protein span at residues 5–25; it reads AVFNALLVSVLATVLWKYIKL. Residues 26–577 are Lumenal-facing; that stretch reads REHAFMVEEE…PFADVLLCST (552 aa). N-linked (GlcNAc...) asparagine glycans are attached at residues Asn98, Asn275, Asn335, and Asn540. The region spanning 481–577 is the Fibronectin type-III domain; that stretch reads KVRDARCQAS…PFADVLLCST (97 aa).

Belongs to the glycosyltransferase 61 family.

It is found in the endoplasmic reticulum membrane. The catalysed reaction is 3-O-(alpha-D-mannosyl)-L-threonyl-[protein] + UDP-N-acetyl-alpha-D-glucosamine = 3-O-(N-acetyl-beta-D-glucosaminyl-(1-&gt;4)-alpha-D-mannosyl)-L-threonyl-[protein] + UDP + H(+). Its pathway is protein modification; protein glycosylation. Functionally, O-linked mannose beta-1,4-N-acetylglucosaminyltransferase that transfers UDP-N-acetyl-D-glucosamine to the 4-position of the mannose to generate N-acetyl-D-glucosamine-beta-1,4-O-D-mannosylprotein. Involved in the biosynthesis of the phosphorylated O-mannosyl trisaccharide (N-acetylgalactosamine-beta-3-N-acetylglucosamine-beta-4-(phosphate-6-)mannose), a carbohydrate structure present in alpha-dystroglycan (DAG1), which is required for binding laminin G-like domain-containing extracellular proteins with high affinity. The polypeptide is Protein O-linked-mannose beta-1,4-N-acetylglucosaminyltransferase 2 (POMGNT2) (Gallus gallus (Chicken)).